A 1663-amino-acid chain; its full sequence is Cortactin-binding protein 2 (1663 aa).

Disordered stretches follow at residues 1–26 (MATDGASCEPDFSRAPEDAAGATAEA), 203–225 (KKKTSALEEELSTEKRRSTDMEA), 359–440 (QASH…LHPG), 454–478 (GNANDPDQNGNTTQSPPSRDVSPTS), and 497–615 (SRFT…PPKP). A coiled-coil region spans residues 119-276 (RKMQERMSTQ…EQLKRGSDSK (158 aa)). Polar residues-rich tracts occupy residues 385–396 (GPSTDSAPDLTN) and 418–435 (QSHSQAPLHSLHSPSANA). Arg-498 is modified (asymmetric dimethylarginine). The segment covering 606-615 (PTTPQLPPKP) has biased composition (pro residues). ANK repeat units lie at residues 709-739 (GRPTLLQQAAAQGNVTLLSMLLNEEGLDINY), 743-772 (DGHSALYSAAKNGHTDCVRLLLNAEAQVDA), 776-805 (NGFTPLCAAAAQGHFKCVELLTAYDADINH), 809-838 (GGQTPLYLACKNGNKECIKLLLEAGSDRSV), 842-871 (DGWTPLHAAVDTGNVDSVKLLMYHSAPARG), and 912-942 (EGWTAAHIAASKGFKNCLEILCRHAGLEPDR). The interval 1449 to 1490 (KGENGTWRKVSTSPRKKSGHFSSPTWNKPDLNEEGIRNTTTS) is disordered. A Phosphoserine modification is found at Ser-1524. The segment at 1579-1663 (VSEKEVSPLS…KNEQVEKPNK (85 aa)) is disordered. Over residues 1586–1595 (PLSSHQTTEC) the composition is skewed to polar residues. The segment covering 1624–1638 (SQNTKRSSSSSNTRQ) has biased composition (low complexity). The span at 1645-1663 (SKEEIWNLHKNEQVEKPNK) shows a compositional bias: basic and acidic residues.

As to quaternary structure, interacts with CTTN/cortactin SH3 domain. Interacts with STRN, STRN4/zinedin and MOB4/phocein; this interactions mediate the association with the STRIPAK core complex and may regulate dendritic spine distribution of the STRIPAK complex in hippocampal neurons. Activation of glutamate receptors weakens the interaction with STRN and STRN4.

It is found in the cytoplasm. Its subcellular location is the cell cortex. The protein resides in the cell projection. It localises to the dendritic spine. Regulates the dendritic spine distribution of CTTN/cortactin in hippocampal neurons, and thus controls dendritic spinogenesis and dendritic spine maintenance. Associates with the striatin-interacting phosphatase and kinase (STRIPAK) core complex to regulate dendritic spine distribution of the STRIPAK complex in hippocampal neurons. The sequence is that of Cortactin-binding protein 2 (CTTNBP2) from Rhinolophus ferrumequinum (Greater horseshoe bat).